The primary structure comprises 558 residues: Potassium-transporting ATPase potassium-binding subunit 1 (558 aa).

Transmembrane regions (helical) follow at residues 1 to 21 (MEIILFLTMMVMIAYVFSGYL), 66 to 86 (FNGFMGVITFVLLIVQQWLFL), 127 to 147 (MIVMTYLMFTSSASGYAVCIA), 166 to 186 (IVRFIVRVLLPLSCLISILLM), 245 to 265 (IWSNFIEMGSMMLLPMSMLFL), 281 to 301 (ALILFVAMFFIFIAILTLTMW), 327 to 347 (FGAGLSALFTVITTAFTTGSV), 354 to 374 (LTPLGGLGPMVLMMLNVVFGG), 377 to 397 (VGLMNLLIYVLLTLFICSLMV), 416 to 436 (IVLVFLIHPILILVFSALAFM), 482 to 502 (ISTGIIMLLSRYIPIILQLMI), and 531 to 551 (IVFIVLLSGLTFIPVLLLGPI).

The protein belongs to the KdpA family. In terms of assembly, the system is composed of three essential subunits: KdpA, KdpB and KdpC.

Its subcellular location is the cell membrane. Part of the high-affinity ATP-driven potassium transport (or Kdp) system, which catalyzes the hydrolysis of ATP coupled with the electrogenic transport of potassium into the cytoplasm. This subunit binds the extracellular potassium ions and delivers the ions to the membrane domain of KdpB through an intramembrane tunnel. This Staphylococcus aureus (strain MRSA252) protein is Potassium-transporting ATPase potassium-binding subunit 1.